The primary structure comprises 182 residues: Ribosome maturation factor RimM (182 aa).

The PRC barrel domain occupies 103 to 182 (EDEFYWRELF…RIEVDWDPGF (80 aa)).

This sequence belongs to the RimM family. Binds ribosomal protein uS19.

Its subcellular location is the cytoplasm. An accessory protein needed during the final step in the assembly of 30S ribosomal subunit, possibly for assembly of the head region. Essential for efficient processing of 16S rRNA. May be needed both before and after RbfA during the maturation of 16S rRNA. It has affinity for free ribosomal 30S subunits but not for 70S ribosomes. This Vibrio parahaemolyticus serotype O3:K6 (strain RIMD 2210633) protein is Ribosome maturation factor RimM.